Consider the following 349-residue polypeptide: Ribosomal RNA large subunit methyltransferase M (349 aa).

S-adenosyl-L-methionine is bound by residues 216 to 219, D235, D255, and D271; that span reads APGG. K300 serves as the catalytic Proton acceptor.

This sequence belongs to the class I-like SAM-binding methyltransferase superfamily. RNA methyltransferase RlmE family. RlmM subfamily. Monomer.

It localises to the cytoplasm. It catalyses the reaction cytidine(2498) in 23S rRNA + S-adenosyl-L-methionine = 2'-O-methylcytidine(2498) in 23S rRNA + S-adenosyl-L-homocysteine + H(+). Functionally, catalyzes the 2'-O-methylation at nucleotide C2498 in 23S rRNA. In Saccharophagus degradans (strain 2-40 / ATCC 43961 / DSM 17024), this protein is Ribosomal RNA large subunit methyltransferase M.